A 597-amino-acid chain; its full sequence is Serine/arginine repetitive matrix protein 3 (597 aa).

Positions 1 to 31 (MSSTVNNGAASMQSTPDAANGFPQPSSSSGT) are enriched in polar residues. The disordered stretch occupies residues 1 to 47 (MSSTVNNGAASMQSTPDAANGFPQPSSSSGTWPRAEEELRAAEPGLV). A CWF21 domain is found at 55 to 98 (LDHERKRRVELKCMELQEMMEEQGYSEEEIRQKVGTFRQMLMEK). A compositionally biased stretch (basic and acidic residues) spans 99-109 (EGVLTREDRPG). Residues 99–597 (EGVLTREDRP…GPAPLPPPAA (499 aa)) form a disordered region. Composition is skewed to basic residues over residues 149–158 (RGHRGYRTKH), 168–186 (PKKK…KKRR), 199–211 (LRKK…KHRR), and 219–243 (RRKR…KKRP). Composition is skewed to low complexity over residues 257 to 278 (SGSS…PSRL) and 291 to 313 (SQRS…SPQR). 2 stretches are compositionally biased toward gly residues: residues 315 to 328 (GGSG…GGRP) and 374 to 383 (GRGGRAAGGA). Over residues 384–412 (GRRRRRRRRRRRSRSSASAPRRRGRRRPR) the composition is skewed to basic residues. 3 stretches are compositionally biased toward low complexity: residues 417–433 (RGSS…SDSG), 466–476 (RPASTSPSPGA), and 488–507 (SSRS…SPSK). The segment covering 530–549 (LSRDKDGEGRARHSEAEATR) has biased composition (basic and acidic residues). Over residues 550–565 (ARRRSRSYSPIRKRRR) the composition is skewed to basic residues.

Belongs to the CWC21 family. Expressed in breast cancer cell lines.

Functionally, may play a role in regulating breast cancer cell invasiveness. May be involved in RYBP-mediated breast cancer progression. The polypeptide is Serine/arginine repetitive matrix protein 3 (SRRM3) (Homo sapiens (Human)).